Here is a 47-residue protein sequence, read N- to C-terminus: Large ribosomal subunit protein bL34 (47 aa).

It belongs to the bacterial ribosomal protein bL34 family.

The chain is Large ribosomal subunit protein bL34 (rpmH) from Mycobacterium leprae (strain TN).